The sequence spans 91 residues: MALDSAKKREIIAKFGNDEKDTGSPAVQIALLTERINEINEHLQQHKHDHSSRLGLLKLVGQRKRLMRYLKRKDHDKYLEVITALNLRDRV.

Belongs to the universal ribosomal protein uS15 family. As to quaternary structure, part of the 30S ribosomal subunit. Forms a bridge to the 50S subunit in the 70S ribosome, contacting the 23S rRNA.

Its function is as follows. One of the primary rRNA binding proteins, it binds directly to 16S rRNA where it helps nucleate assembly of the platform of the 30S subunit by binding and bridging several RNA helices of the 16S rRNA. In terms of biological role, forms an intersubunit bridge (bridge B4) with the 23S rRNA of the 50S subunit in the ribosome. This is Small ribosomal subunit protein uS15 from Nautilia profundicola (strain ATCC BAA-1463 / DSM 18972 / AmH).